The chain runs to 84 residues: Cytochrome b559 subunit alpha (84 aa).

Residues 22-36 (IIHSITIPSLFVAGF) form a helical membrane-spanning segment. His24 is a binding site for heme.

Belongs to the PsbE/PsbF family. In terms of assembly, heterodimer of an alpha subunit and a beta subunit. PSII is composed of 1 copy each of membrane proteins PsbA, PsbB, PsbC, PsbD, PsbE, PsbF, PsbH, PsbI, PsbJ, PsbK, PsbL, PsbM, PsbT, PsbX, PsbY, PsbZ, Psb30/Ycf12, at least 3 peripheral proteins of the oxygen-evolving complex and a large number of cofactors. It forms dimeric complexes. Requires heme b as cofactor.

The protein localises to the plastid. The protein resides in the chloroplast thylakoid membrane. Functionally, this b-type cytochrome is tightly associated with the reaction center of photosystem II (PSII). PSII is a light-driven water:plastoquinone oxidoreductase that uses light energy to abstract electrons from H(2)O, generating O(2) and a proton gradient subsequently used for ATP formation. It consists of a core antenna complex that captures photons, and an electron transfer chain that converts photonic excitation into a charge separation. The protein is Cytochrome b559 subunit alpha of Emiliania huxleyi (Coccolithophore).